A 490-amino-acid polypeptide reads, in one-letter code: Tektin-3 (490 aa).

O-linked (GalNAc...) threonine glycosylation is found at T7 and T9. N-linked (GlcNAc...) asparagine glycosylation is found at N41, N86, N111, and N276. Residues 419–456 (RLVNEVYEVDETIQTLQQRLRDSEDTLQSLAHTKATLE) are a coiled coil.

The protein belongs to the tektin family. Microtubule inner protein component of sperm flagellar doublet microtubules. Interacts with TEKT1, TEKT2, TEKT4 and TEKT5. Interacts with CCDC38. N- and O-glycosylated. Post-translationally, may be proteolytically processed during the epididymal transit of spermatozoa. In terms of processing, ubiquitinated, leading to its degradation. Deubiquitinated by USP16, promoting its stability. In terms of tissue distribution, expressed in epididymal sperm (at protein level).

The protein localises to the cytoplasm. It is found in the cytoskeleton. The protein resides in the cilium axoneme. Its subcellular location is the flagellum axoneme. It localises to the cytoplasmic vesicle. The protein localises to the secretory vesicle. It is found in the acrosome outer membrane. Functionally, microtubule inner protein (MIP) part of the dynein-decorated doublet microtubules (DMTs) in cilia and flagellar axoneme. Forms filamentous polymers in the walls of ciliary and flagellar microtubules. Required for normal sperm mobility. This chain is Tektin-3 (Tekt3), found in Rattus norvegicus (Rat).